We begin with the raw amino-acid sequence, 512 residues long: MTDAHTAGPFIAAIDQGTTSSRCIVFDRDGRIVSVDQKEHEQIFPKPGWVEHNAAEIWTNVQEVVAGAVEKAGITRDDIKAIGITNQRETTLLWDKNTGEPVHNALVWQDTRTDALCKELGRNVGQDRFRRETGLPLASYFAGPKARWLLDNVEGLRERAEAGDILFGTMDTWVIWNLTGGVNGGKHVTDVTNASRTMLMNLHTMQWDDKIAESIGVPLAMLPEIRSSAEVYGEITGGKLGDLLGGIPVASALGDQQAALFGQTCFSEGEAKSTYGTGTFMLMNTGDKIINSYSGLLTTVGYQIGDQKPVYALEGSIAVTGSLVQWMRDQMGLIKSAAEIETLASSVEDNGGAYFVPAFSGLFAPYWRSDARGVIAGLTRYVTKAHIARAVLEATAWQTREITDAMTKDSGVELAALKVDGGMTSNNLLMQTLSDFLDAPVVRPMVAETTCLGAAYAAGLAVGFWTNTEDLRANWRRAAEWTPNMAAETRDREYKSWLKAVERTMGWIEDEE.

Thr-18 is a binding site for ADP. Residues Thr-18, Thr-19, and Ser-20 each coordinate ATP. Thr-18 lines the sn-glycerol 3-phosphate pocket. Arg-22 is a binding site for ADP. Positions 88, 89, 140, and 255 each coordinate sn-glycerol 3-phosphate. Positions 88, 89, 140, 255, and 256 each coordinate glycerol. ADP-binding residues include Thr-277 and Gly-321. ATP is bound by residues Thr-277, Gly-321, Gln-325, and Gly-422. Residues Gly-422 and Asn-426 each contribute to the ADP site.

The protein belongs to the FGGY kinase family.

The catalysed reaction is glycerol + ATP = sn-glycerol 3-phosphate + ADP + H(+). The protein operates within polyol metabolism; glycerol degradation via glycerol kinase pathway; sn-glycerol 3-phosphate from glycerol: step 1/1. Its activity is regulated as follows. Inhibited by fructose 1,6-bisphosphate (FBP). Functionally, key enzyme in the regulation of glycerol uptake and metabolism. Catalyzes the phosphorylation of glycerol to yield sn-glycerol 3-phosphate. This chain is Glycerol kinase 1, found in Streptomyces avermitilis (strain ATCC 31267 / DSM 46492 / JCM 5070 / NBRC 14893 / NCIMB 12804 / NRRL 8165 / MA-4680).